A 131-amino-acid chain; its full sequence is Ribonuclease VapC4 (131 aa).

Positions Ile4–Lys106 constitute a PINc domain. Mg(2+) contacts are provided by Asp7 and Asp102.

Belongs to the PINc/VapC protein family. Mg(2+) is required as a cofactor.

Toxic component of a type II toxin-antitoxin (TA) system. An RNase. Its cognate antitoxin is VapB4. The chain is Ribonuclease VapC4 from Methanocaldococcus jannaschii (strain ATCC 43067 / DSM 2661 / JAL-1 / JCM 10045 / NBRC 100440) (Methanococcus jannaschii).